The primary structure comprises 396 residues: 1-deoxy-D-xylulose 5-phosphate reductoisomerase (396 aa).

Positions 17, 18, 19, 20, 47, and 130 each coordinate NADPH. Lys131 lines the 1-deoxy-D-xylulose 5-phosphate pocket. An NADPH-binding site is contributed by Glu132. Asp156 lines the Mn(2+) pocket. Residues Ser157, Glu158, Ser182, and His205 each coordinate 1-deoxy-D-xylulose 5-phosphate. Glu158 is a Mn(2+) binding site. Gly211 serves as a coordination point for NADPH. Ser218, Asn223, Lys224, and Glu227 together coordinate 1-deoxy-D-xylulose 5-phosphate. Position 227 (Glu227) interacts with Mn(2+).

Belongs to the DXR family. It depends on Mg(2+) as a cofactor. Mn(2+) is required as a cofactor.

It carries out the reaction 2-C-methyl-D-erythritol 4-phosphate + NADP(+) = 1-deoxy-D-xylulose 5-phosphate + NADPH + H(+). The protein operates within isoprenoid biosynthesis; isopentenyl diphosphate biosynthesis via DXP pathway; isopentenyl diphosphate from 1-deoxy-D-xylulose 5-phosphate: step 1/6. Functionally, catalyzes the NADPH-dependent rearrangement and reduction of 1-deoxy-D-xylulose-5-phosphate (DXP) to 2-C-methyl-D-erythritol 4-phosphate (MEP). In Rhizobium etli (strain CIAT 652), this protein is 1-deoxy-D-xylulose 5-phosphate reductoisomerase.